The sequence spans 854 residues: Putative Tricorn-like protease C-terminal subunit (854 aa).

Histidine 539 serves as the catalytic Charge relay system. The PDZ-like stretch occupies residues 554 to 646 (PIGGLGADYE…RVTVKLLKDE (93 aa)). Glycine 709 lines the substrate pocket. Serine 756 acts as the Nucleophile in catalysis. Glutamate 814 acts as the Charge relay system in catalysis.

The protein belongs to the peptidase S41B family.

It is found in the cytoplasm. In terms of biological role, degrades oligopeptides in a sequential manner. In Sulfurisphaera tokodaii (strain DSM 16993 / JCM 10545 / NBRC 100140 / 7) (Sulfolobus tokodaii), this protein is Putative Tricorn-like protease C-terminal subunit (triC).